Reading from the N-terminus, the 462-residue chain is MSAAKLPKSFVWGYATAAYQIEGSPDKDGREPSIWDTFCKAPGKIADGSSGDVATDSYNRWREDVQLLKSYGVKAYRFSLSWSRIIPKGGRSDPVNGAGIKHYRTLIEELVKEGITPFVTLYHWDLPQALDDRYGGWLNKEEAIQDFTNYAKLCFESFGDLVQNWITFNEPWVISVMGYGNGIFAPGHVSNTEPWIVSHHIILAHAHAVKLYRDEFKEKQGGQIGITLDSHWLIPYDDTDASKEATLRAMEFKLGRFANPIYKGEYPPRIKKILGDRLPEFTPEEIELVKGSSDFFGLNTYTTHLVQDGGSDELAGFVKTGHTRADGTQLGTQSDMGWLQTYGPGFRWLLNYLWKAYDKPVYVTENGFPVKGENDLPVEQAVDDTDRQAYYRDYTEALLQAVTEDGADVRGYFGWSLLDNFEWAEGYKVRFGVTHVDYETQKRTPKKSAEFLSRWFKEHIEE.

Positions 20, 123, and 169 each coordinate substrate. E170 (proton donor) is an active-site residue. Substrate is bound at residue Y301. E365 serves as the catalytic Nucleophile. Residues W415 and 422–423 each bind substrate; that span reads EW.

The protein belongs to the glycosyl hydrolase 1 family.

The catalysed reaction is Hydrolysis of terminal, non-reducing beta-D-glucosyl residues with release of beta-D-glucose.. Its function is as follows. Plays an important role in cellulose degradation. Shows hydrolytic activity against several glycosidic compounds. The polypeptide is Beta-glucosidase 1A (Phanerodontia chrysosporium (White-rot fungus)).